Consider the following 317-residue polypeptide: Annexin D2 (317 aa).

N-acetylalanine is present on alanine 2. Annexin repeat units follow at residues 11-82 (PLPE…LWTL), 83-154 (DPPE…PLVS), 166-238 (MLAR…AVIT), and 242-313 (YPEK…ALLG). Ca(2+)-binding residues include phenylalanine 24, glycine 26, glycine 28, and glutamate 68. Serine 95 is subject to Phosphoserine. Residues threonine 100 and threonine 112 each carry the phosphothreonine modification. Tyrosine 129 is modified (phosphotyrosine). Residues isoleucine 255 and glycine 259 each coordinate Ca(2+). Tyrosine 284 bears the Phosphotyrosine mark. Serine 289 carries the phosphoserine modification. The Ca(2+) site is built by aspartate 299, threonine 300, and glutamate 305.

The protein belongs to the annexin (TC 1.A.31.1) family. In terms of tissue distribution, expressed mainly in roots and flowers. Low in stems and bearly detectable in leaves.

It localises to the cytoplasm. Its subcellular location is the cytosol. The protein localises to the membrane. In terms of biological role, may mediate regulated, targeted secretion of Golgi-derived vesicles during seedling development. This is Annexin D2 (ANN2) from Arabidopsis thaliana (Mouse-ear cress).